The following is a 91-amino-acid chain: Small ribosomal subunit protein uS15c (91 aa).

This sequence belongs to the universal ribosomal protein uS15 family. Part of the 30S ribosomal subunit.

It localises to the plastid. The protein localises to the chloroplast. The sequence is that of Small ribosomal subunit protein uS15c (rps15) from Phalaenopsis aphrodite subsp. formosana (Moth orchid).